The primary structure comprises 195 residues: Pyridoxal 5'-phosphate synthase subunit PdxT (195 aa).

L-glutamine is bound at residue Gly-46–Ser-48. Cys-78 functions as the Nucleophile in the catalytic mechanism. Residues Arg-107 and Ile-136–Arg-137 contribute to the L-glutamine site. Residues His-173 and Glu-175 each act as charge relay system in the active site.

Belongs to the glutaminase PdxT/SNO family. In the presence of PdxS, forms a dodecamer of heterodimers. Only shows activity in the heterodimer.

It catalyses the reaction aldehydo-D-ribose 5-phosphate + D-glyceraldehyde 3-phosphate + L-glutamine = pyridoxal 5'-phosphate + L-glutamate + phosphate + 3 H2O + H(+). The enzyme catalyses L-glutamine + H2O = L-glutamate + NH4(+). It functions in the pathway cofactor biosynthesis; pyridoxal 5'-phosphate biosynthesis. Its function is as follows. Catalyzes the hydrolysis of glutamine to glutamate and ammonia as part of the biosynthesis of pyridoxal 5'-phosphate. The resulting ammonia molecule is channeled to the active site of PdxS. This is Pyridoxal 5'-phosphate synthase subunit PdxT from Dehalococcoides mccartyi (strain ATCC BAA-2100 / JCM 16839 / KCTC 5957 / BAV1).